We begin with the raw amino-acid sequence, 346 residues long: Structure-specific endonuclease subunit SLX1 (346 aa).

The GIY-YIG domain occupies 22 to 105; the sequence is DFYGVYLLRS…QHPYQTRHIK (84 aa). Residues 216–306 form an SLX1-type zinc finger; that stretch reads CFICNETIDY…TPLQGKCLSC (91 aa).

The protein belongs to the SLX1 family. Forms a heterodimer with SLX4. A divalent metal cation serves as cofactor.

It localises to the nucleus. Its function is as follows. Catalytic subunit of the SLX1-SLX4 structure-specific endonuclease that resolves DNA secondary structures generated during DNA repair and recombination. Has endonuclease activity towards branched DNA substrates, introducing single-strand cuts in duplex DNA close to junctions with ss-DNA. This is Structure-specific endonuclease subunit SLX1 from Debaryomyces hansenii (strain ATCC 36239 / CBS 767 / BCRC 21394 / JCM 1990 / NBRC 0083 / IGC 2968) (Yeast).